The following is a 46-amino-acid chain: Protein PsbN (46 aa).

A helical membrane pass occupies residues 7–27; it reads ALSVAIGVLAVLFGLTGFGVY.

The protein belongs to the PsbN family.

It is found in the cellular thylakoid membrane. Its function is as follows. May play a role in photosystem I and II biogenesis. In Synechococcus sp. (strain CC9605), this protein is Protein PsbN.